The chain runs to 549 residues: Formate--tetrahydrofolate ligase (549 aa).

ATP is bound at residue 60 to 67 (TPYGEGKT).

The protein belongs to the formate--tetrahydrofolate ligase family.

The enzyme catalyses (6S)-5,6,7,8-tetrahydrofolate + formate + ATP = (6R)-10-formyltetrahydrofolate + ADP + phosphate. It functions in the pathway one-carbon metabolism; tetrahydrofolate interconversion. This Campylobacter concisus (strain 13826) protein is Formate--tetrahydrofolate ligase.